The chain runs to 290 residues: Feruloyl esterase D (290 aa).

Residues 1 to 25 (MAGLHSRLTTFLLLLLSALPAIAAA) form the signal peptide. The tract at residues 260–280 (HGGDHNPSQRDPGQNDPFAPR) is disordered.

It belongs to the serine esterase family.

The protein localises to the secreted. It catalyses the reaction feruloyl-polysaccharide + H2O = ferulate + polysaccharide.. Involved in degradation of plant cell walls. Hydrolyzes the feruloyl-arabinose ester bond in arabinoxylans as well as the feruloyl-galactose and feruloyl-arabinose ester bonds in pectin. Active against methyl esters of ferulate (MFA), sinapate (MSA), caffeate (MCA) and p-coumarate (MpCA). The chain is Feruloyl esterase D from Neurospora crassa (strain ATCC 24698 / 74-OR23-1A / CBS 708.71 / DSM 1257 / FGSC 987).